The sequence spans 390 residues: Na(+)/H(+) antiporter NhaA 2 (390 aa).

The next 11 membrane-spanning stretches (helical) occupy residues 23 to 43, 63 to 83, 100 to 120, 129 to 149, 158 to 178, 181 to 201, 208 to 228, 265 to 285, 293 to 313, 331 to 351, and 362 to 382; these read IVLI…LAAA, LHLW…GLEI, LPVL…LAIT, GWAI…ALVG, LFLL…IALF, SGLK…LVLV, ALLP…HSGI, GFVI…GADF, LGIA…SILV, LWGI…IAGL, and EAKL…LLVL.

This sequence belongs to the NhaA Na(+)/H(+) (TC 2.A.33) antiporter family.

The protein resides in the cell inner membrane. It carries out the reaction Na(+)(in) + 2 H(+)(out) = Na(+)(out) + 2 H(+)(in). Functionally, na(+)/H(+) antiporter that extrudes sodium in exchange for external protons. This Novosphingobium aromaticivorans (strain ATCC 700278 / DSM 12444 / CCUG 56034 / CIP 105152 / NBRC 16084 / F199) protein is Na(+)/H(+) antiporter NhaA 2.